The chain runs to 243 residues: Ubiquinone/menaquinone biosynthesis C-methyltransferase UbiE (243 aa).

S-adenosyl-L-methionine is bound by residues Thr69, Asp90, and 116 to 117 (DA).

Belongs to the class I-like SAM-binding methyltransferase superfamily. MenG/UbiE family.

It catalyses the reaction a 2-demethylmenaquinol + S-adenosyl-L-methionine = a menaquinol + S-adenosyl-L-homocysteine + H(+). The enzyme catalyses a 2-methoxy-6-(all-trans-polyprenyl)benzene-1,4-diol + S-adenosyl-L-methionine = a 5-methoxy-2-methyl-3-(all-trans-polyprenyl)benzene-1,4-diol + S-adenosyl-L-homocysteine + H(+). The protein operates within quinol/quinone metabolism; menaquinone biosynthesis; menaquinol from 1,4-dihydroxy-2-naphthoate: step 2/2. Its pathway is cofactor biosynthesis; ubiquinone biosynthesis. Its function is as follows. Methyltransferase required for the conversion of demethylmenaquinol (DMKH2) to menaquinol (MKH2) and the conversion of 2-polyprenyl-6-methoxy-1,4-benzoquinol (DDMQH2) to 2-polyprenyl-3-methyl-6-methoxy-1,4-benzoquinol (DMQH2). This Burkholderia multivorans (strain ATCC 17616 / 249) protein is Ubiquinone/menaquinone biosynthesis C-methyltransferase UbiE.